The following is a 650-amino-acid chain: Transcription factor LHW (650 aa).

2 disordered regions span residues 381–417 and 431–470; these read LTKVSNSSVTTPSHSSPQGSQLFEKKHGQPLGPSSVY and LKREGSPRMVNKNETAKPANNRKRLKPGENPRPRPKDRQM. The span at 384-397 shows a compositional bias: low complexity; the sequence is VSNSSVTTPSHSSP. Positions 451–458 match the Nuclear localization signal motif; the sequence is NRKRLKPG. The bHLH domain maps to 455–504; it reads LKPGENPRPRPKDRQMIQDRVKELREIIPNGAKCSIDALLERTIKHMLFL. Over residues 456 to 470 the composition is skewed to basic and acidic residues; the sequence is KPGENPRPRPKDRQM.

The protein belongs to the bHLH protein family. LHW subfamily. Homodimer. Can also interact with bHLH proteins. In terms of tissue distribution, expressed in both root and shoot meristems. Present in root tips.

The protein localises to the nucleus. Transcription activator that regulates root development; promotes the production of stele cells in roots. Coordinately controls the number of all vascular cell types by regulating the size of the pool of cells from which they arise. The sequence is that of Transcription factor LHW (LHW) from Arabidopsis thaliana (Mouse-ear cress).